Reading from the N-terminus, the 329-residue chain is Alternative oxidase, mitochondrial (329 aa).

Residues 115–135 (VISRCLFLETVAGVPGMVGGM) traverse the membrane as a helical segment. 3 residues coordinate Fe cation: glutamate 123, glutamate 162, and histidine 165. Residues 181–201 (VSIIITQAIMYLFLLVAYVIS) traverse the membrane as a helical segment. Glutamate 213, glutamate 266, and histidine 269 together coordinate Fe cation. The interval 300 to 329 (EMYSNQPSGKTRTDFGSEGAKTASNVNKHV) is disordered.

Belongs to the alternative oxidase family. As to quaternary structure, homodimer; disulfide-linked. The cofactor is Fe cation.

It is found in the mitochondrion inner membrane. In terms of biological role, catalyzes cyanide-resistant oxygen consumption. May increase respiration when the cytochrome respiratory pathway is restricted, or in response to low temperatures. In Trypanosoma brucei brucei, this protein is Alternative oxidase, mitochondrial (AOX).